The primary structure comprises 458 residues: Argininosuccinate lyase (458 aa).

This sequence belongs to the lyase 1 family. Argininosuccinate lyase subfamily.

The protein localises to the cytoplasm. The enzyme catalyses 2-(N(omega)-L-arginino)succinate = fumarate + L-arginine. It participates in amino-acid biosynthesis; L-arginine biosynthesis; L-arginine from L-ornithine and carbamoyl phosphate: step 3/3. This Salmonella dublin (strain CT_02021853) protein is Argininosuccinate lyase.